The sequence spans 352 residues: Probable dual-specificity RNA methyltransferase RlmN (352 aa).

Glu93 functions as the Proton acceptor in the catalytic mechanism. The region spanning 99–333 (FNYGYSVCVT…IRLERGSSID (235 aa)) is the Radical SAM core domain. Cys106 and Cys336 form a disulfide bridge. [4Fe-4S] cluster contacts are provided by Cys113, Cys117, and Cys120. S-adenosyl-L-methionine-binding positions include 164–165 (GE), Ser196, and Asn295. Cys336 acts as the S-methylcysteine intermediate in catalysis.

The protein belongs to the radical SAM superfamily. RlmN family. It depends on [4Fe-4S] cluster as a cofactor.

The protein localises to the cytoplasm. The catalysed reaction is adenosine(2503) in 23S rRNA + 2 reduced [2Fe-2S]-[ferredoxin] + 2 S-adenosyl-L-methionine = 2-methyladenosine(2503) in 23S rRNA + 5'-deoxyadenosine + L-methionine + 2 oxidized [2Fe-2S]-[ferredoxin] + S-adenosyl-L-homocysteine. It catalyses the reaction adenosine(37) in tRNA + 2 reduced [2Fe-2S]-[ferredoxin] + 2 S-adenosyl-L-methionine = 2-methyladenosine(37) in tRNA + 5'-deoxyadenosine + L-methionine + 2 oxidized [2Fe-2S]-[ferredoxin] + S-adenosyl-L-homocysteine. Its function is as follows. Specifically methylates position 2 of adenine 2503 in 23S rRNA and position 2 of adenine 37 in tRNAs. The chain is Probable dual-specificity RNA methyltransferase RlmN from Malacoplasma penetrans (strain HF-2) (Mycoplasma penetrans).